The chain runs to 357 residues: Protein RecA (357 aa).

71 to 78 provides a ligand contact to ATP; the sequence is GPESSGKT.

The protein belongs to the RecA family.

It localises to the cytoplasm. Its function is as follows. Can catalyze the hydrolysis of ATP in the presence of single-stranded DNA, the ATP-dependent uptake of single-stranded DNA by duplex DNA, and the ATP-dependent hybridization of homologous single-stranded DNAs. It interacts with LexA causing its activation and leading to its autocatalytic cleavage. This is Protein RecA from Ehrlichia canis (strain Jake).